The sequence spans 435 residues: Enolase (435 aa).

Q163 is a (2R)-2-phosphoglycerate binding site. The active-site Proton donor is E205. The Mg(2+) site is built by D243, E292, and D319. (2R)-2-phosphoglycerate contacts are provided by K344, R373, S374, and K395. The active-site Proton acceptor is K344.

This sequence belongs to the enolase family. It depends on Mg(2+) as a cofactor.

The protein resides in the cytoplasm. Its subcellular location is the secreted. It localises to the cell surface. It carries out the reaction (2R)-2-phosphoglycerate = phosphoenolpyruvate + H2O. Its pathway is carbohydrate degradation; glycolysis; pyruvate from D-glyceraldehyde 3-phosphate: step 4/5. Its function is as follows. Catalyzes the reversible conversion of 2-phosphoglycerate (2-PG) into phosphoenolpyruvate (PEP). It is essential for the degradation of carbohydrates via glycolysis. The polypeptide is Enolase (Streptococcus agalactiae serotype Ia (strain ATCC 27591 / A909 / CDC SS700)).